The following is a 129-amino-acid chain: Small ribosomal subunit protein uS11 (129 aa).

It belongs to the universal ribosomal protein uS11 family. As to quaternary structure, part of the 30S ribosomal subunit. Interacts with proteins S7 and S18. Binds to IF-3.

Located on the platform of the 30S subunit, it bridges several disparate RNA helices of the 16S rRNA. Forms part of the Shine-Dalgarno cleft in the 70S ribosome. This is Small ribosomal subunit protein uS11 from Pseudomonas fluorescens (strain SBW25).